The primary structure comprises 468 residues: Argininosuccinate lyase (468 aa).

Belongs to the lyase 1 family. Argininosuccinate lyase subfamily.

It is found in the cytoplasm. The enzyme catalyses 2-(N(omega)-L-arginino)succinate = fumarate + L-arginine. It participates in amino-acid biosynthesis; L-arginine biosynthesis; L-arginine from L-ornithine and carbamoyl phosphate: step 3/3. This is Argininosuccinate lyase from Cutibacterium acnes (strain DSM 16379 / KPA171202) (Propionibacterium acnes).